We begin with the raw amino-acid sequence, 328 residues long: MNDKWYRHIIGARTIKTGLATFFTSLFCMLLNLTPIFAILTAIVTIEPTAKASLKKGYKRLPATVIGALFAVVFTYVFGDQSPLSYALSATFTILICTKLNLQVGTTVAVLTSVAMIPSIHEAYVFNFFSRLLTALIGLVTAGLVNFIILPPKYYHQLEEQLALSEKKMYRLFYERCNELLLGKFSSEKTSKELSKLNIIAQKVETLMSYQRDELHYHKNEDNWKLLNRLTNRAYNNRLFISHLSNIIYLPKHTSIAFDANEKIALINISNSINGIIQKGSFARQKKSIATLKSSVKQMDEFDQNQMKSTLIYEILLIYKILDSRYAK.

The next 4 membrane-spanning stretches (helical) occupy residues L26–I46, L61–Q81, A109–F129, and L132–P152.

It belongs to the UPF0421 family.

The protein localises to the cell membrane. This Staphylococcus epidermidis (strain ATCC 12228 / FDA PCI 1200) protein is UPF0421 protein SE_1574.